A 612-amino-acid chain; its full sequence is Kelch-like protein 40a (612 aa).

One can recognise a BTB domain in the interval 34–101 (VDCILKIKDK…IYTSDINLTE (68 aa)). A BACK domain is found at 136-238 (CLAIFRLGLL…PTSYFKEKVE (103 aa)). Basic residues predominate over residues 266–275 (RVKRSSHRKE). Residues 266-290 (RVKRSSHRKEGKSAEFESDDDDEDG) are disordered. Residues 281–290 (FESDDDDEDG) are compositionally biased toward acidic residues. Kelch repeat units lie at residues 350–402 (QIFV…EAEN), 403–452 (SIYV…SHKG), 453–500 (LVYV…VHKN), 502–547 (IYVV…ELGG), and 549–604 (LYAI…GVRL).

The protein belongs to the KLHL40 family. Component of the BCR(KLHL40) E3 ubiquitin ligase complex. As to expression, expressed in skeletal muscle and heart. Detected, although at much lower levels, in brain, eye and fin.

Its subcellular location is the cytoplasm. The protein resides in the myofibril. It localises to the sarcomere. The protein localises to the a band. It is found in the i band. Functionally, substrate-specific adapter of a BCR (BTB-CUL3-RBX1) E3 ubiquitin ligase complex. Required for skeletal muscle development. This chain is Kelch-like protein 40a (klhl40a), found in Danio rerio (Zebrafish).